An 877-amino-acid polypeptide reads, in one-letter code: GPI inositol-deacylase (877 aa).

A helical transmembrane segment spans residues 35–55; the sequence is FLSRLFCALAVLFSYSIYQSF. Residue Ser-206 is part of the active site. Residues Asn-291, Asn-336, Asn-374, Asn-448, and Asn-473 are each glycosylated (N-linked (GlcNAc...) asparagine). The next 8 helical transmembrane spans lie at 597–617, 637–657, 674–694, 735–755, 771–791, 809–829, 834–854, and 857–877; these read VLAW…SDFI, MPIC…LPDF, PLVG…SFVI, VLVN…ILLW, ISTC…HVAI, NFYY…GGTI, VCLK…FSVG, and WTWI…ASII.

This sequence belongs to the GPI inositol-deacylase family.

Its subcellular location is the endoplasmic reticulum membrane. Functionally, involved in inositol deacylation of GPI-anchored proteins which plays important roles in the quality control and ER-associated degradation of GPI-anchored proteins. The sequence is that of GPI inositol-deacylase (BST1) from Cryptococcus neoformans var. neoformans serotype D (strain JEC21 / ATCC MYA-565) (Filobasidiella neoformans).